Consider the following 194-residue polypeptide: Putative 3-methyladenine DNA glycosylase (194 aa).

Belongs to the DNA glycosylase MPG family.

The polypeptide is Putative 3-methyladenine DNA glycosylase (Synechococcus elongatus (strain ATCC 33912 / PCC 7942 / FACHB-805) (Anacystis nidulans R2)).